Here is a 360-residue protein sequence, read N- to C-terminus: MTTTLQQRSSANVWERFCTWITSTENRIYVGWFGVLMIPTLLAATVCFIIAFVAAPPVDIDGIREPVAGSLIYGNNIISGAVVPSSNAIGLHFYPIWEAASLDEWLYNGGPYQLVVFHFLIGCACYLGRQWELSYRLGMRPWICVAYSAPLASATAVFLIYPIGQGSFSDGMPLGISGTFNFMIVFQAEHNILMHPFHMLGVAGVFGGSLFSAMHGSLVTSSLVRETTEVESQNYGYKFGQEEETYNIVAAHGYFGRLIFQYASFNNSRQLHFFLAAWPVIGIWFTALGVSTMAFNLNGFNFNQSIIDSQGRVINTWADIINRANLGMEVMHERNAHNFPLDLAAGEVAPVALTAPAING.

Transmembrane regions (helical) follow at residues Tyr29–Val46, His118–Leu133, and Trp142–Ala156. His118 is a binding site for chlorophyll a. Tyr126 is a pheophytin a binding site. Residues Asp170 and Glu189 each contribute to the [CaMn4O5] cluster site. The chain crosses the membrane as a helical span at residues Phe197–Leu218. His198 contacts chlorophyll a. Residues His215 and Ser264–Phe265 each bind a quinone. Fe cation is bound at residue His215. His272 is a binding site for Fe cation. Residues Phe274–Leu288 form a helical membrane-spanning segment. 4 residues coordinate [CaMn4O5] cluster: His332, Glu333, Asp342, and Ala344. The propeptide occupies Ala345–Gly360.

Belongs to the reaction center PufL/M/PsbA/D family. In terms of assembly, PSII is composed of 1 copy each of membrane proteins PsbA, PsbB, PsbC, PsbD, PsbE, PsbF, PsbH, PsbI, PsbJ, PsbK, PsbL, PsbM, PsbT, PsbX, PsbY, PsbZ, Psb30/Ycf12, peripheral proteins PsbO, CyanoQ (PsbQ), PsbU, PsbV and a large number of cofactors. It forms dimeric complexes. It depends on The D1/D2 heterodimer binds P680, chlorophylls that are the primary electron donor of PSII, and subsequent electron acceptors. It shares a non-heme iron and each subunit binds pheophytin, quinone, additional chlorophylls, carotenoids and lipids. D1 provides most of the ligands for the Mn4-Ca-O5 cluster of the oxygen-evolving complex (OEC). There is also a Cl(-1) ion associated with D1 and D2, which is required for oxygen evolution. The PSII complex binds additional chlorophylls, carotenoids and specific lipids. as a cofactor. In terms of processing, tyr-161 forms a radical intermediate that is referred to as redox-active TyrZ, YZ or Y-Z. C-terminally processed by CtpA; processing is essential to allow assembly of the oxygen-evolving complex and thus photosynthetic growth.

The protein resides in the cellular thylakoid membrane. The enzyme catalyses 2 a plastoquinone + 4 hnu + 2 H2O = 2 a plastoquinol + O2. Its function is as follows. Photosystem II (PSII) is a light-driven water:plastoquinone oxidoreductase that uses light energy to abstract electrons from H(2)O, generating O(2) and a proton gradient subsequently used for ATP formation. It consists of a core antenna complex that captures photons, and an electron transfer chain that converts photonic excitation into a charge separation. The D1/D2 (PsbA/PsbD) reaction center heterodimer binds P680, the primary electron donor of PSII as well as several subsequent electron acceptors. This Trichormus variabilis (strain ATCC 29413 / PCC 7937) (Anabaena variabilis) protein is Photosystem II protein D1 3.